We begin with the raw amino-acid sequence, 238 residues long: Sugar fermentation stimulation protein homolog (238 aa).

The protein belongs to the SfsA family.

This Actinobacillus succinogenes (strain ATCC 55618 / DSM 22257 / CCUG 43843 / 130Z) protein is Sugar fermentation stimulation protein homolog.